The sequence spans 239 residues: THAP domain-containing protein 3 (239 aa).

A THAP-type zinc finger spans residues 1–82 (MPKSCAARQC…LKHNAVPTVF (82 aa)). The tract at residues 84-177 (FQDPTQQVRE…RRTPNKQPSD (94 aa)) is disordered. The residue at position 122 (S122) is a Phosphoserine. Residues 177 to 180 (DHSY) carry the HCFC1-binding motif (HBM) motif.

As to quaternary structure, component of a THAP1/THAP3-HCFC1-OGT complex that contains at least, either THAP1 or THAP3, HCFC1 and OGT. Interacts directly with OGT and HCFC1 (via its HBM). As to expression, highly expressed in heart, skeletal muscle and placenta. Weaker expression in brain, kidney and liver.

In terms of biological role, component of a THAP1/THAP3-HCFC1-OGT complex that is required for the regulation of the transcriptional activity of RRM1. The chain is THAP domain-containing protein 3 (THAP3) from Homo sapiens (Human).